We begin with the raw amino-acid sequence, 236 residues long: Ureidoacrylate amidohydrolase RutB (236 aa).

Residue Asp-24 is the Proton acceptor of the active site. Residue Lys-133 is part of the active site. The active-site Nucleophile is the Cys-166.

It belongs to the isochorismatase family. RutB subfamily.

It catalyses the reaction (Z)-3-ureidoacrylate + H2O + H(+) = (Z)-3-aminoacrylate + NH4(+) + CO2. The catalysed reaction is (Z)-3-ureidoacrylate + H2O = (Z)-3-aminoacrylate + carbamate + H(+). It carries out the reaction (Z)-2-methylureidoacrylate + H2O + H(+) = (Z)-2-methylaminoacrylate + NH4(+) + CO2. Its function is as follows. Hydrolyzes ureidoacrylate to form aminoacrylate and carbamate. The carbamate hydrolyzes spontaneously, thereby releasing one of the nitrogen atoms of the pyrimidine ring as ammonia and one of its carbon atoms as CO2. In Klebsiella pneumoniae (strain 342), this protein is Ureidoacrylate amidohydrolase RutB.